Consider the following 195-residue polypeptide: Imidazoleglycerol-phosphate dehydratase (195 aa).

Belongs to the imidazoleglycerol-phosphate dehydratase family.

It localises to the cytoplasm. It catalyses the reaction D-erythro-1-(imidazol-4-yl)glycerol 3-phosphate = 3-(imidazol-4-yl)-2-oxopropyl phosphate + H2O. Its pathway is amino-acid biosynthesis; L-histidine biosynthesis; L-histidine from 5-phospho-alpha-D-ribose 1-diphosphate: step 6/9. This Bordetella bronchiseptica (strain ATCC BAA-588 / NCTC 13252 / RB50) (Alcaligenes bronchisepticus) protein is Imidazoleglycerol-phosphate dehydratase.